A 229-amino-acid chain; its full sequence is 5'-methylthioadenosine/S-adenosylhomocysteine nucleosidase (229 aa).

E12 serves as the catalytic Proton acceptor. Residues G78, I152, and M173–E174 contribute to the substrate site. The active-site Proton donor is the D197.

Belongs to the PNP/UDP phosphorylase family. MtnN subfamily.

It catalyses the reaction S-adenosyl-L-homocysteine + H2O = S-(5-deoxy-D-ribos-5-yl)-L-homocysteine + adenine. It carries out the reaction S-methyl-5'-thioadenosine + H2O = 5-(methylsulfanyl)-D-ribose + adenine. The enzyme catalyses 5'-deoxyadenosine + H2O = 5-deoxy-D-ribose + adenine. It participates in amino-acid biosynthesis; L-methionine biosynthesis via salvage pathway; S-methyl-5-thio-alpha-D-ribose 1-phosphate from S-methyl-5'-thioadenosine (hydrolase route): step 1/2. Catalyzes the irreversible cleavage of the glycosidic bond in both 5'-methylthioadenosine (MTA) and S-adenosylhomocysteine (SAH/AdoHcy) to adenine and the corresponding thioribose, 5'-methylthioribose and S-ribosylhomocysteine, respectively. Also cleaves 5'-deoxyadenosine, a toxic by-product of radical S-adenosylmethionine (SAM) enzymes, into 5-deoxyribose and adenine. This Histophilus somni (strain 2336) (Haemophilus somnus) protein is 5'-methylthioadenosine/S-adenosylhomocysteine nucleosidase.